The primary structure comprises 374 residues: S-adenosylmethionine:tRNA ribosyltransferase-isomerase (374 aa).

It belongs to the QueA family. In terms of assembly, monomer.

Its subcellular location is the cytoplasm. It catalyses the reaction 7-aminomethyl-7-carbaguanosine(34) in tRNA + S-adenosyl-L-methionine = epoxyqueuosine(34) in tRNA + adenine + L-methionine + 2 H(+). It functions in the pathway tRNA modification; tRNA-queuosine biosynthesis. Functionally, transfers and isomerizes the ribose moiety from AdoMet to the 7-aminomethyl group of 7-deazaguanine (preQ1-tRNA) to give epoxyqueuosine (oQ-tRNA). The chain is S-adenosylmethionine:tRNA ribosyltransferase-isomerase from Prochlorococcus marinus (strain MIT 9301).